Here is a 1705-residue protein sequence, read N- to C-terminus: ALK tyrosine kinase receptor (1705 aa).

Positions 1–21 (MIARILYFFLWSAAFLPELQC) are cleaved as a signal peptide. Residues 22–1035 (ASQRTADALT…SLSHLALGLS (1014 aa)) lie on the Extracellular side of the membrane. N-linked (GlcNAc...) asparagine glycosylation is found at Asn40 and Asn48. The segment at 54 to 76 (RIKRKTLSVDFAVPSLLRYYLAL) is heparin-binding region. N-linked (GlcNAc...) asparagine glycans are attached at residues Asn124, Asn259, Asn334, Asn434, Asn442, Asn458, Asn484, Asn578, Asn590, and Asn635. Residues 486 to 644 (SYCSFGREDC…NFTLSMECFL (159 aa)) enclose the MAM domain. Cysteines 694 and 707 form a disulfide. A glycan (N-linked (GlcNAc...) asparagine) is linked at Asn717. The cysteines at positions 788 and 799 are disulfide-linked. N-linked (GlcNAc...) asparagine glycosylation is found at Asn808 and Asn881. The interval 842-892 (GGGRGYSSQSETPEEVMDRDPSIPGRNGKSGTAGGGGGWNDSAPVPQGGRP) is disordered. Cysteines 903 and 921 form a disulfide. Residue Asn979 is glycosylated (N-linked (GlcNAc...) asparagine). 2 disulfide bridges follow: Cys980-Cys988 and Cys983-Cys997. Residues 980–1016 (CSHCESGDCHETSEGMVCYCDEELTLAPDGVSCINST) form an EGF-like region. A glycan (N-linked (GlcNAc...) asparagine) is linked at Asn1014. The chain crosses the membrane as a helical span at residues 1036–1056 (VGTSALIAALLLAVSGVMIMY). At 1057-1705 (RRKHTELQSI…KMEGHNATVL (649 aa)) the chain is on the cytoplasmic side. Residues 1113 to 1389 (ISLTRGLGHG…IDYCLQDPDV (277 aa)) enclose the Protein kinase domain. Residues 1119–1127 (LGHGAFGEV) and Lys1147 contribute to the ATP site. Residue Asp1246 is the Proton acceptor of the active site. Disordered stretches follow at residues 1395–1499 (PVEY…GHVN), 1505–1524 (AHSSEKESRNRKPTNLWNPT), 1532–1557 (QQQKRQQVQAQRQTSGPRIPGEGQEQ), 1588–1613 (QQQQQQQQQQGLCRPLLPPPPPPAPT), and 1646–1681 (GLPMEPMQGPQLPPPHPGQQRPISLTRASGPEDSRP). Positions 1484 to 1493 (KPSSTTSNAQ) are enriched in polar residues. 2 stretches are compositionally biased toward low complexity: residues 1532–1544 (QQQKRQQVQAQRQ) and 1588–1602 (QQQQQQQQQQGLCRP). Residues 1603–1613 (LLPPPPPPAPT) show a composition bias toward pro residues.

It belongs to the protein kinase superfamily. Tyr protein kinase family. Insulin receptor subfamily. In terms of assembly, homodimer; homodimerizes upon binding to alkal ligands (alkal1, alkal2a or alkal2b). As to expression, highly expressed in the developing central nervous system: highly expressed in brain, with much lower expression in heart, caudal fin and testis.

It localises to the cell membrane. It catalyses the reaction L-tyrosyl-[protein] + ATP = O-phospho-L-tyrosyl-[protein] + ADP + H(+). Inhibited by ALK inhibitor TAE684. In terms of biological role, receptor tyrosine kinase required for neurogenesis in the developing central nervous system. Following activation by alkal ligands (alkal1, alkal2a or alkal2b) at the cell surface, transduces an extracellular signal into an intracellular response. Ligand-binding to the extracellular domain induces tyrosine kinase activation, resulting in the activation of the mitogen-activated protein kinase (MAPK) pathway. Phosphorylates almost exclusively at the first tyrosine of the Y-x-x-x-Y-Y motif. The polypeptide is ALK tyrosine kinase receptor (Danio rerio (Zebrafish)).